Consider the following 250-residue polypeptide: GTP cyclohydrolase 1 type 2 homolog (250 aa).

A divalent metal cation-binding residues include His63, His64, Asp100, His218, and Glu222.

The protein belongs to the GTP cyclohydrolase I type 2/NIF3 family. As to quaternary structure, homohexamer.

The polypeptide is GTP cyclohydrolase 1 type 2 homolog (Pyrococcus horikoshii (strain ATCC 700860 / DSM 12428 / JCM 9974 / NBRC 100139 / OT-3)).